Reading from the N-terminus, the 321-residue chain is Probable arabinan endo-1,5-alpha-L-arabinosidase C (321 aa).

An N-terminal signal peptide occupies residues 1–18 (MYLYTLILLFLASANVNA). Catalysis depends on Asp33, which acts as the Proton acceptor. N-linked (GlcNAc...) asparagine glycosylation is present at Asn192. The Proton donor role is filled by Glu200. N-linked (GlcNAc...) asparagine glycosylation is present at Asn224.

It belongs to the glycosyl hydrolase 43 family.

Its subcellular location is the secreted. It catalyses the reaction Endohydrolysis of (1-&gt;5)-alpha-arabinofuranosidic linkages in (1-&gt;5)-arabinans.. The protein operates within glycan metabolism; L-arabinan degradation. Functionally, endo-1,5-alpha-L-arabinanase involved in degradation of pectin. Its preferred substrate is linear 1,5-alpha-L-arabinan. The polypeptide is Probable arabinan endo-1,5-alpha-L-arabinosidase C (abnC) (Aspergillus fumigatus (strain CBS 144.89 / FGSC A1163 / CEA10) (Neosartorya fumigata)).